Reading from the N-terminus, the 143-residue chain is Large ribosomal subunit protein uL11 (143 aa).

The protein belongs to the universal ribosomal protein uL11 family. As to quaternary structure, part of the ribosomal stalk of the 50S ribosomal subunit. Interacts with L10 and the large rRNA to form the base of the stalk. L10 forms an elongated spine to which L12 dimers bind in a sequential fashion forming a multimeric L10(L12)X complex. Post-translationally, one or more lysine residues are methylated.

Functionally, forms part of the ribosomal stalk which helps the ribosome interact with GTP-bound translation factors. The protein is Large ribosomal subunit protein uL11 of Erythrobacter litoralis (strain HTCC2594).